Reading from the N-terminus, the 185-residue chain is Peptidyl-tRNA hydrolase (185 aa).

Tyr14 is a tRNA binding site. Catalysis depends on His19, which acts as the Proton acceptor. Positions 64, 66, and 112 each coordinate tRNA.

It belongs to the PTH family. In terms of assembly, monomer.

It is found in the cytoplasm. The catalysed reaction is an N-acyl-L-alpha-aminoacyl-tRNA + H2O = an N-acyl-L-amino acid + a tRNA + H(+). In terms of biological role, hydrolyzes ribosome-free peptidyl-tRNAs (with 1 or more amino acids incorporated), which drop off the ribosome during protein synthesis, or as a result of ribosome stalling. Functionally, catalyzes the release of premature peptidyl moieties from peptidyl-tRNA molecules trapped in stalled 50S ribosomal subunits, and thus maintains levels of free tRNAs and 50S ribosomes. The chain is Peptidyl-tRNA hydrolase from Lactiplantibacillus plantarum (strain ATCC BAA-793 / NCIMB 8826 / WCFS1) (Lactobacillus plantarum).